The chain runs to 602 residues: Elongation factor 4 (602 aa).

Positions 7-189 constitute a tr-type G domain; that stretch reads SRIRNFCIIA…AVVDRVPAPA (183 aa). GTP contacts are provided by residues 19 to 24 and 136 to 139; these read DHGKST and NKID.

It belongs to the TRAFAC class translation factor GTPase superfamily. Classic translation factor GTPase family. LepA subfamily.

The protein resides in the cell inner membrane. It catalyses the reaction GTP + H2O = GDP + phosphate + H(+). Its function is as follows. Required for accurate and efficient protein synthesis under certain stress conditions. May act as a fidelity factor of the translation reaction, by catalyzing a one-codon backward translocation of tRNAs on improperly translocated ribosomes. Back-translocation proceeds from a post-translocation (POST) complex to a pre-translocation (PRE) complex, thus giving elongation factor G a second chance to translocate the tRNAs correctly. Binds to ribosomes in a GTP-dependent manner. This chain is Elongation factor 4, found in Synechococcus sp. (strain CC9902).